A 129-amino-acid polypeptide reads, in one-letter code: Small ribosomal subunit protein uS11 (129 aa).

Belongs to the universal ribosomal protein uS11 family. Part of the 30S ribosomal subunit. Interacts with proteins S7 and S18. Binds to IF-3.

Functionally, located on the platform of the 30S subunit, it bridges several disparate RNA helices of the 16S rRNA. Forms part of the Shine-Dalgarno cleft in the 70S ribosome. The chain is Small ribosomal subunit protein uS11 from Nitratidesulfovibrio vulgaris (strain ATCC 29579 / DSM 644 / CCUG 34227 / NCIMB 8303 / VKM B-1760 / Hildenborough) (Desulfovibrio vulgaris).